The primary structure comprises 679 residues: NADPH--cytochrome P450 reductase (679 aa).

Residues 1-21 (MADSHGDTGATMPEAAAQEAS) lie on the Lumenal side of the membrane. Residues 22–42 (VFSMTDVVLFSLIVGLITYWF) traverse the membrane as a helical segment. The Cytoplasmic portion of the chain corresponds to 43–679 (LFRKKKEEVP…KGRYSLDVWS (637 aa)). Serine 64 bears the Phosphoserine mark. A Flavodoxin-like domain is found at 81–225 (IVVFYGSQTG…DFITWREQFW (145 aa)). Residues 87 to 92 (SQTGTA), 139 to 142 (ATYG), 174 to 183 (LGNKTYEHFN), and aspartate 209 each bind FMN. The FAD-binding FR-type domain maps to 280 to 522 (KNPFLATVTT…FVRKSQFRLP (243 aa)). Residue arginine 299 coordinates NADP(+). Residues arginine 425, 455 to 458 (RYYS), 473 to 475 (CAV), tyrosine 479, and 489 to 492 (GVAT) contribute to the FAD site. NADP(+) is bound by residues threonine 536, 597-598 (SR), 603-607 (KVYVQ), and aspartate 640. Tryptophan 678 provides a ligand contact to FAD.

The protein belongs to the NADPH--cytochrome P450 reductase family. In the N-terminal section; belongs to the flavodoxin family. This sequence in the C-terminal section; belongs to the flavoprotein pyridine nucleotide cytochrome reductase family. It depends on FAD as a cofactor. Requires FMN as cofactor.

It is found in the endoplasmic reticulum membrane. The enzyme catalyses 2 oxidized [cytochrome P450] + NADPH = 2 reduced [cytochrome P450] + NADP(+) + H(+). In terms of biological role, this enzyme is required for electron transfer from NADP to cytochrome P450 in microsomes. It can also provide electron transfer to heme oxygenase and cytochrome B5. In Oryctolagus cuniculus (Rabbit), this protein is NADPH--cytochrome P450 reductase.